The primary structure comprises 591 residues: PDZ and LIM domain protein 5 (591 aa).

Residue serine 2 is modified to N-acetylserine. Serine 2 carries the post-translational modification Phosphoserine. A PDZ domain is found at 2 to 85; it reads SNYNVSLVGP…SLNMTLQRAS (84 aa). Position 89 is an N6-acetyllysine; alternate (lysine 89). Lysine 89 is subject to N6-succinyllysine; alternate. A Glycyl lysine isopeptide (Lys-Gly) (interchain with G-Cter in SUMO2); alternate cross-link involves residue lysine 89. Phosphoserine occurs at positions 111, 134, and 137. Disordered stretches follow at residues 125–240 and 255–334; these read YNKV…GPPR and THSD…SNRP. Polar residues predominate over residues 134 to 143; it reads SVSSPKVTSI. The span at 144-161 shows a compositional bias: low complexity; the sequence is PSPSSAFTPAHAATSSHA. A compositionally biased stretch (pro residues) spans 162-174; the sequence is SPPPVAAVTPPPL. Polar residues-rich tracts occupy residues 183–195 and 207–217; these read ANPS…SPPN and PTVTSVCSESA. Phosphoserine is present on residues serine 228 and serine 260. 2 stretches are compositionally biased toward basic and acidic residues: residues 258–273 and 293–304; these read DASK…DWRP and EHLKESENDNAK. Residues 310-329 are compositionally biased toward low complexity; that stretch reads PEPSQQSASPLSAAESLESP. A phosphoserine mark is found at serine 313 and serine 318. Lysine 346 is modified (N6-acetyllysine). A disordered region spans residues 348-398; the sequence is VGSTSVKSPSWQRPNQAAPSTGRISNSASSSGTGAPMKPAVGPPQPSDQDT. Polar residues predominate over residues 349–380; it reads GSTSVKSPSWQRPNQAAPSTGRISNSASSSGT. 2 positions are modified to phosphoserine: serine 355 and serine 357. 3 LIM zinc-binding domains span residues 413–472, 472–531, and 531–591; these read PMCA…FFAP, PECG…LFGT, and TICR…SVNF.

In terms of assembly, interacts with various PKC isoforms through the LIM domains. Interacts with actin and alpha-actinin through the PDZ domain. Interacts (via LIM domains) with SIPA1L1/SPAR; this interaction may occur preferentially with isoform 1. In terms of tissue distribution, detected in brain, in neurons, including in hippocampal neurons, and glial cells (at protein level). Detected in heart and skeletal muscle.

It localises to the postsynaptic density. The protein resides in the presynapse. It is found in the postsynapse. The protein localises to the cytoplasm. Its subcellular location is the cytosol. In terms of biological role, may play an important role in the heart development by scaffolding PKC to the Z-disk region. May play a role in the regulation of cardiomyocyte expansion. Isoforms lacking the LIM domains may negatively modulate the scaffolding activity of isoform 1. Overexpression promotes the development of heart hypertrophy. Contributes to the regulation of dendritic spine morphogenesis in neurons. May be required to restrain postsynaptic growth of excitatory synapses. Isoform 1, but not isoform 2, expression favors spine thinning and elongation. This chain is PDZ and LIM domain protein 5 (Pdlim5), found in Rattus norvegicus (Rat).